Reading from the N-terminus, the 212-residue chain is Thymidylate kinase (212 aa).

Residue 10 to 17 participates in ATP binding; sequence GPDGAGKT.

The protein belongs to the thymidylate kinase family.

It catalyses the reaction dTMP + ATP = dTDP + ADP. Its function is as follows. Phosphorylation of dTMP to form dTDP in both de novo and salvage pathways of dTTP synthesis. In Lactobacillus delbrueckii subsp. bulgaricus (strain ATCC 11842 / DSM 20081 / BCRC 10696 / JCM 1002 / NBRC 13953 / NCIMB 11778 / NCTC 12712 / WDCM 00102 / Lb 14), this protein is Thymidylate kinase.